A 304-amino-acid chain; its full sequence is N-acetylmuramic acid 6-phosphate etherase (304 aa).

Positions 60 to 221 (GVSVLRHGGR…STAVMVRLGY (162 aa)) constitute an SIS domain. E88 functions as the Proton donor in the catalytic mechanism. Residue E119 is part of the active site.

The protein belongs to the GCKR-like family. MurNAc-6-P etherase subfamily. As to quaternary structure, homodimer.

It carries out the reaction N-acetyl-D-muramate 6-phosphate + H2O = N-acetyl-D-glucosamine 6-phosphate + (R)-lactate. It functions in the pathway amino-sugar metabolism; N-acetylmuramate degradation. In terms of biological role, specifically catalyzes the cleavage of the D-lactyl ether substituent of MurNAc 6-phosphate, producing GlcNAc 6-phosphate and D-lactate. This chain is N-acetylmuramic acid 6-phosphate etherase, found in Thermobifida fusca (strain YX).